A 219-amino-acid chain; its full sequence is Adenylate kinase (219 aa).

10 to 15 (GAGKGT) contributes to the ATP binding site. The interval 30–59 (STGDMLRAAVKAGTPLGQQAKKIMDEGGLV) is NMP. AMP is bound by residues T31, R36, 57–59 (GLV), 85–88 (GFPR), and Q92. The tract at residues 122–159 (GRRVHPGSGRVYHVTHNPPRQEGKDDVTGEDLVQREDD) is LID. Residues R123 and 132 to 133 (VY) each bind ATP. The segment at 128 to 150 (GSGRVYHVTHNPPRQEGKDDVTG) is disordered. A compositionally biased stretch (basic and acidic residues) spans 140–150 (PRQEGKDDVTG). AMP is bound by residues R156 and R167. Residue R203 participates in ATP binding.

It belongs to the adenylate kinase family. In terms of assembly, monomer.

The protein localises to the cytoplasm. The catalysed reaction is AMP + ATP = 2 ADP. It functions in the pathway purine metabolism; AMP biosynthesis via salvage pathway; AMP from ADP: step 1/1. Functionally, catalyzes the reversible transfer of the terminal phosphate group between ATP and AMP. Plays an important role in cellular energy homeostasis and in adenine nucleotide metabolism. The sequence is that of Adenylate kinase from Halorhodospira halophila (strain DSM 244 / SL1) (Ectothiorhodospira halophila (strain DSM 244 / SL1)).